The primary structure comprises 209 residues: Na(+)-translocating NADH-quinone reductase subunit D (209 aa).

Transmembrane regions (helical) follow at residues L42–I62, V70–L90, V103–M123, F131–V151, and N178–L198.

This sequence belongs to the NqrDE/RnfAE family. Composed of six subunits; NqrA, NqrB, NqrC, NqrD, NqrE and NqrF.

It localises to the cell inner membrane. The catalysed reaction is a ubiquinone + n Na(+)(in) + NADH + H(+) = a ubiquinol + n Na(+)(out) + NAD(+). Its function is as follows. NQR complex catalyzes the reduction of ubiquinone-1 to ubiquinol by two successive reactions, coupled with the transport of Na(+) ions from the cytoplasm to the periplasm. NqrA to NqrE are probably involved in the second step, the conversion of ubisemiquinone to ubiquinol. In Yersinia enterocolitica serotype O:8 / biotype 1B (strain NCTC 13174 / 8081), this protein is Na(+)-translocating NADH-quinone reductase subunit D.